Reading from the N-terminus, the 65-residue chain is uncharacterized protein (65 aa).

The Cytoplasmic segment spans residues 1–20 (MRFSNCFNKFKFCIGTEKKY). A helical membrane pass occupies residues 21-43 (SFPICTSTYTSFSLFACIWSIFI). Residues 44-65 (HISLNKSFIYQKSWYYSFFQNR) are Extracellular-facing.

It is found in the host membrane. This is an uncharacterized protein from Acidianus sp. F28 (AFV-2).